Consider the following 425-residue polypeptide: Apolipoprotein N-acyltransferase (425 aa).

Transmembrane regions (helical) follow at residues 12 to 32 (LLAC…AYAI), 34 to 54 (NPYI…LAFL), 60 to 80 (SAFA…ALSF), 88 to 108 (LLPL…YLLL), 120 to 140 (FLGS…DSFF), and 142 to 162 (YSVF…CIFL). In terms of domain architecture, CN hydrolase spans 201–425 (VSTKTPQDLK…LGDILFRKRS (225 aa)). Glutamate 242 serves as the catalytic Proton acceptor. The active site involves lysine 296. The active-site Nucleophile is the cysteine 349.

Belongs to the CN hydrolase family. Apolipoprotein N-acyltransferase subfamily.

The protein resides in the cell inner membrane. It catalyses the reaction N-terminal S-1,2-diacyl-sn-glyceryl-L-cysteinyl-[lipoprotein] + a glycerophospholipid = N-acyl-S-1,2-diacyl-sn-glyceryl-L-cysteinyl-[lipoprotein] + a 2-acyl-sn-glycero-3-phospholipid + H(+). The protein operates within protein modification; lipoprotein biosynthesis (N-acyl transfer). Functionally, catalyzes the phospholipid dependent N-acylation of the N-terminal cysteine of apolipoprotein, the last step in lipoprotein maturation. The chain is Apolipoprotein N-acyltransferase from Helicobacter pylori (strain ATCC 700392 / 26695) (Campylobacter pylori).